The sequence spans 81 residues: UPF0180 protein ABC2430 (81 aa).

This sequence belongs to the UPF0180 family.

The chain is UPF0180 protein ABC2430 from Shouchella clausii (strain KSM-K16) (Alkalihalobacillus clausii).